A 291-amino-acid chain; its full sequence is Small ribosomal subunit protein uS2 (291 aa).

The disordered stretch occupies residues 254–291 (RTSNRDNKNNKNNNNTDNTDNAASIKEEDLIGGSNNEN). Residues 263-277 (NKNNNNTDNTDNAAS) show a composition bias toward low complexity.

It belongs to the universal ribosomal protein uS2 family.

The sequence is that of Small ribosomal subunit protein uS2 from Ehrlichia canis (strain Jake).